Consider the following 707-residue polypeptide: Zinc finger protein 60 (707 aa).

The KRAB domain maps to 14 to 86 (VTFRDVAVDF…VKKETGRPSQ (73 aa)). C2H2-type zinc fingers lie at residues 173 to 195 (YKCK…ESIH), 201 to 223 (YECK…QKSH), 229 to 251 (FECN…KNIH), 257 to 282 (FECE…RTIH), 288 to 310 (YKCN…QKIH), 316 to 338 (FHCK…ENIH), 344 to 366 (FECK…YDTH), 372 to 394 (FECN…QKTH), 400 to 422 (FKCK…QRIH), 428 to 450 (YQCK…QSIH), 456 to 478 (FECK…QRFH), 484 to 506 (FECK…KTSH), 512 to 534 (FECK…RIIH), 540 to 562 (YKCN…EKIH), 568 to 590 (FECK…QTIH), 596 to 618 (YECE…QRIH), 624 to 646 (FQCK…ERIH), 652 to 674 (FQCK…FRIH), and 680 to 702 (YECS…QSIH).

It belongs to the krueppel C2H2-type zinc-finger protein family. In terms of tissue distribution, expressed widely and evenly in most adult mouse tissues.

It is found in the nucleus. In terms of biological role, may have a role during differentiation processes. The protein is Zinc finger protein 60 (Zfp60) of Mus musculus (Mouse).